We begin with the raw amino-acid sequence, 280 residues long: Exfoliative toxin A (280 aa).

Residues 1–38 (MNNSKIISKVLLSLSLFTVGASAFVIQDELMQKNHAKA) form the signal peptide. Catalysis depends on charge relay system residues histidine 110, aspartate 158, and serine 233.

This sequence belongs to the peptidase S1B family. Ca(2+) serves as cofactor.

Functionally, has serine protease-like properties and binds to the skin protein profilaggrin. Cleaves substrates after acidic residues. Exfoliative toxins cause impetigous diseases commonly referred as staphylococcal scalded skin syndrome (SSSS). This Staphylococcus aureus protein is Exfoliative toxin A (eta).